The following is a 138-amino-acid chain: Ribulose bisphosphate carboxylase small subunit (138 aa).

Belongs to the RuBisCO small chain family. Heterohexadecamer of 8 large and 8 small subunits.

It is found in the plastid. The protein resides in the chloroplast. In terms of biological role, ruBisCO catalyzes two reactions: the carboxylation of D-ribulose 1,5-bisphosphate, the primary event in carbon dioxide fixation, as well as the oxidative fragmentation of the pentose substrate in the photorespiration process. Both reactions occur simultaneously and in competition at the same active site. Although the small subunit is not catalytic it is essential for maximal activity. The chain is Ribulose bisphosphate carboxylase small subunit from Antithamnion sp. (Red alga).